The primary structure comprises 496 residues: Glutamyl-tRNA(Gln) amidotransferase subunit A (496 aa).

Residues Lys-79 and Ser-159 each act as charge relay system in the active site. Residue Ser-183 is the Acyl-ester intermediate of the active site.

It belongs to the amidase family. GatA subfamily. Heterotrimer of A, B and C subunits.

It catalyses the reaction L-glutamyl-tRNA(Gln) + L-glutamine + ATP + H2O = L-glutaminyl-tRNA(Gln) + L-glutamate + ADP + phosphate + H(+). Functionally, allows the formation of correctly charged Gln-tRNA(Gln) through the transamidation of misacylated Glu-tRNA(Gln) in organisms which lack glutaminyl-tRNA synthetase. The reaction takes place in the presence of glutamine and ATP through an activated gamma-phospho-Glu-tRNA(Gln). The sequence is that of Glutamyl-tRNA(Gln) amidotransferase subunit A from Bartonella quintana (strain Toulouse) (Rochalimaea quintana).